Here is a 559-residue protein sequence, read N- to C-terminus: Paxillin (559 aa).

Positions 3 to 15 (DLDALLADLESTT) match the LD motif 1 motif. Residues 17–139 (HISKRPVFLT…SPTMTSTSLG (123 aa)) are disordered. Position 31 is a phosphotyrosine (Tyr31). Residues 45 to 54 (VPPPVPPPPS) are compositionally biased toward pro residues. Over residues 79-98 (QQPQSQSPIYSSSAKSSSAS) the composition is skewed to low complexity. The residue at position 118 (Tyr118) is a Phosphotyrosine; by FAK1. The segment covering 121-137 (PNKQKSAEPSPTMTSTS) has biased composition (polar residues). Positions 144-156 (ELDRLLLELNAVQ) match the LD motif 2 motif. Disordered regions lie at residues 158-213 (NPPS…GIED) and 225-262 (LESS…SASS). Residues 217–229 (SVESLLDELESSV) carry the LD motif 3 motif. The segment covering 237-262 (TVSQGEVSSPQRVNASQQQTRISASS) has biased composition (polar residues). A required for binding to PARVA and ILK region spans residues 263–282 (ATRELDELMASLSDFKFMAQ). Short sequence motifs (LD motif) lie at residues 266–277 (ELDELMASLSDF) and 301–313 (QLDT…QSDL). Positions 281-301 (AQGKAGGSSSPPSTTPKPGSQ) are disordered. LIM zinc-binding domains follow at residues 326–376 (CGAC…CEKD), 385–435 (CYYC…CRKD), 444–494 (CGGC…CEVH), and 503–553 (CSGC…CQNC).

Interacts (via LD motif 4) with PARVA/PARVIN and ILK. Post-translationally, phosphorylated on tyrosine residues during integrin-mediated cell adhesion, embryonic development, fibroblast transformation and following stimulation of cells by mitogens.

The protein localises to the cytoplasm. It localises to the cytoskeleton. The protein resides in the cell junction. It is found in the focal adhesion. Its subcellular location is the cell cortex. Functionally, cytoskeletal protein involved in actin-membrane attachment at sites of cell adhesion to the extracellular matrix (focal adhesion). Binds in vitro to vinculin as well as to the SH3 domain of c-SRC and, when tyrosine phosphorylated, to the SH2 domain of v-CRK. The protein is Paxillin (PXN) of Gallus gallus (Chicken).